We begin with the raw amino-acid sequence, 611 residues long: Aspartate--tRNA(Asp/Asn) ligase (611 aa).

L-aspartate is bound at residue Glu177. Residues 201 to 204 (QLFK) are aspartate. Position 223 (Arg223) interacts with L-aspartate. ATP-binding positions include 223-225 (RDE) and Gln232. His461 contributes to the L-aspartate binding site. Residue Glu499 coordinates ATP. Arg506 lines the L-aspartate pocket. 551-554 (GVDR) contacts ATP.

It belongs to the class-II aminoacyl-tRNA synthetase family. Type 1 subfamily. As to quaternary structure, homodimer.

It is found in the cytoplasm. It carries out the reaction tRNA(Asx) + L-aspartate + ATP = L-aspartyl-tRNA(Asx) + AMP + diphosphate. Functionally, aspartyl-tRNA synthetase with relaxed tRNA specificity since it is able to aspartylate not only its cognate tRNA(Asp) but also tRNA(Asn). Reaction proceeds in two steps: L-aspartate is first activated by ATP to form Asp-AMP and then transferred to the acceptor end of tRNA(Asp/Asn). This is Aspartate--tRNA(Asp/Asn) ligase from Synechococcus sp. (strain WH7803).